Here is a 1149-residue protein sequence, read N- to C-terminus: Guanine nucleotide exchange factor DBS (1149 aa).

The CRAL-TRIO domain occupies Met52 to His224. A Spectrin repeat occupies His355–Leu454. Ser457, Ser462, Ser471, and Ser480 each carry phosphoserine. The stretch at Leu503–Asp528 forms a coiled coil. Residues Lys555–Glu627 are disordered. The segment covering Pro583–Ser594 has biased composition (low complexity). Residues Ala607 to Gln616 are compositionally biased toward basic and acidic residues. Residue Ser621 is modified to Phosphoserine. Residue Thr622 is modified to Phosphothreonine. In terms of domain architecture, DH spans Leu632–Ser812. The region spanning Lys830–Thr946 is the PH domain. Positions Ser956–Ser1033 are disordered. Positions Ser964–Thr978 are enriched in low complexity. Ser1033, Ser1034, Ser1041, and Ser1042 each carry phosphoserine. The 62-residue stretch at Leu1055–Gly1116 folds into the SH3 domain.

Belongs to the MCF2 family. In terms of assembly, interacts with GTP-bound RAC1. Interacts with CDC42. Interacts with RHOA. Interacts with CCPG1, which results in specific inhibition of its exchange activity toward RHOA, but does not affect its activity on CDC42. Post-translationally, mainly phosphorylated on serine. As to expression, highest expression in the brain, where it is found in neurons and alpha-tanycytes (at protein level). Detected in brain, and at lower levels in the heart.

It is found in the cytoplasm. The protein resides in the cell membrane. In terms of biological role, guanine nucleotide exchange factor that catalyzes guanine nucleotide exchange on RHOA and CDC42, and thereby contributes to the regulation of RHOA and CDC42 signaling pathways. Seems to lack activity with RAC1. Becomes activated and highly tumorigenic by truncation of the N-terminus. The protein is Guanine nucleotide exchange factor DBS (Mcf2l) of Rattus norvegicus (Rat).